The primary structure comprises 350 residues: Alcohol dehydrogenase (350 aa).

Residue Cys-46 participates in Zn(2+) binding. 3 residues coordinate NAD(+): His-47, Thr-48, and His-51. Zn(2+) contacts are provided by His-69, Cys-100, Cys-103, Cys-106, Cys-114, and Cys-156. Residues Gly-183, Gly-184, Leu-185, and Asp-204 each coordinate NAD(+). Thr-205 is subject to Phosphothreonine. The NAD(+) site is built by Lys-209 and Phe-224. Thr-250 is modified (phosphothreonine). Val-271, Met-273, Ser-296, Val-298, and Arg-343 together coordinate NAD(+).

This sequence belongs to the zinc-containing alcohol dehydrogenase family. In terms of assembly, homotetramer. The cofactor is Zn(2+).

It localises to the cytoplasm. It catalyses the reaction a primary alcohol + NAD(+) = an aldehyde + NADH + H(+). The enzyme catalyses a secondary alcohol + NAD(+) = a ketone + NADH + H(+). The catalysed reaction is ethanol + NAD(+) = acetaldehyde + NADH + H(+). Reduces acetaldehyde to ethanol during the fermentation of glucose. The polypeptide is Alcohol dehydrogenase (adh1) (Schizosaccharomyces pombe (strain 972 / ATCC 24843) (Fission yeast)).